The sequence spans 184 residues: Probable RNA 2'-phosphotransferase (184 aa).

Belongs to the KptA/TPT1 family.

In terms of biological role, removes the 2'-phosphate from RNA via an intermediate in which the phosphate is ADP-ribosylated by NAD followed by a presumed transesterification to release the RNA and generate ADP-ribose 1''-2''-cyclic phosphate (APPR&gt;P). May function as an ADP-ribosylase. The chain is Probable RNA 2'-phosphotransferase from Escherichia coli O8 (strain IAI1).